Here is a 326-residue protein sequence, read N- to C-terminus: GTPase IMAP family member 5 (326 aa).

Residues 1–297 lie on the Cytoplasmic side of the membrane; that stretch reads MEDHGFEELS…MLCRVTSCLD (297 aa). An AIG1-type G domain is found at 42–245; it reads SGLLRILLVG…HSNDLFVYTQ (204 aa). GTP is bound by residues 51–59, S72, 169–171, and N206; these read GKSGCGKSA and HKE. The helical; Anchor for type IV membrane protein transmembrane segment at 298-318 threads the bilayer; the sequence is WHIAVSVLLIVLGLTLLITLI. Residues 319–326 are Lumenal-facing; that stretch reads NMYIGRWK.

This sequence belongs to the TRAFAC class TrmE-Era-EngA-EngB-Septin-like GTPase superfamily. AIG1/Toc34/Toc159-like paraseptin GTPase family. IAN subfamily. As to quaternary structure, interacts with BAD, BAK1, BAX, BCL2, BCL2L1/Bcl-xL and BCL2L11/BimEL. The interaction with BAX is increased, when cells initiate apoptosis upon IL2 withdrawal. Forms a complex with BCL2L1 or MCL1 and HSPA8/HSC70; the interaction between HSPA8 and BCL2L1 or MCL1 is impaired in the absence of GIMAP5. May interact (via N-terminus) with microtubules. As to expression, primarily expressed in spleen, heart, lung and intestine and, at lower levels, in kidney, stomach and muscle. Expressed in thymus and lymph nodes (at protein level). In the spleen, expressed in periarteriolar lymphatic sheets. Isoform 2: Expressed at higher levels in T lymphocytes compared to isoform 1.

The protein resides in the lysosome membrane. Its subcellular location is the endosome. It is found in the multivesicular body membrane. The protein localises to the endosome membrane. In terms of biological role, required for mitochondrial integrity and T-cell survival. May contribute to T-cell quiescence. Its function is as follows. Plays a role in T lymphocyte development and the optimal generation of CD4/CD8 double-positive thymocytes. Inhibitor of GSK3A, possibly by sequestering GSK3A in cytoplasmic vesicles and impairing its translocation to the nucleus. Consequently, impairs GSK3A-dependent transcriptional program and regulation of the DNA damage response occurring during T cells proliferation. Required for the survival of peripheral T cells, natural killer (NK) and NK T-cell development and the maintenance of normal liver function. Promotes the survival of quiescent T-cells. May regulate Ca(2+) homeostasis by modulating lysosomal Ca(2+) stores, preventing its accumulation in the absence of T cell activation. May play a role in mitochondrial DNA segregation in hematopoietic tissues. Is a regulator of liver endothelial cell homeostasis. The sequence is that of GTPase IMAP family member 5 (Gimap5) from Rattus norvegicus (Rat).